Here is a 578-residue protein sequence, read N- to C-terminus: Laccase-10 (578 aa).

Positions 1-29 (MGARCLALLLLYGTLLLLLLLPQLPLAGA) are cleaved as a signal peptide. Plastocyanin-like domains are found at residues 37 to 153 (NVKL…PKAG) and 163 to 319 (KDVP…YAPP). Residues asparagine 42 and asparagine 83 are each glycosylated (N-linked (GlcNAc...) asparagine). Cu cation-binding residues include histidine 87 and histidine 89. N-linked (GlcNAc...) asparagine glycosylation is present at asparagine 119. Positions 132 and 134 each coordinate Cu cation. Asparagine 192, asparagine 208, asparagine 244, asparagine 307, asparagine 336, asparagine 384, asparagine 392, asparagine 402, asparagine 438, asparagine 445, asparagine 448, asparagine 451, and asparagine 461 each carry an N-linked (GlcNAc...) asparagine glycan. Residues 428–562 (DFPASPLEPF…KMAWVVNDGP (135 aa)) enclose the Plastocyanin-like 3 domain. Cu cation contacts are provided by histidine 479, histidine 482, histidine 484, histidine 541, cysteine 542, histidine 543, and histidine 547.

This sequence belongs to the multicopper oxidase family. Cu cation is required as a cofactor.

Its subcellular location is the secreted. The protein resides in the extracellular space. The protein localises to the apoplast. It catalyses the reaction 4 hydroquinone + O2 = 4 benzosemiquinone + 2 H2O. Its function is as follows. Lignin degradation and detoxification of lignin-derived products. The protein is Laccase-10 (LAC10) of Oryza sativa subsp. japonica (Rice).